The sequence spans 222 residues: N-(5'-phosphoribosyl)anthranilate isomerase (222 aa).

Belongs to the TrpF family.

It carries out the reaction N-(5-phospho-beta-D-ribosyl)anthranilate = 1-(2-carboxyphenylamino)-1-deoxy-D-ribulose 5-phosphate. It functions in the pathway amino-acid biosynthesis; L-tryptophan biosynthesis; L-tryptophan from chorismate: step 3/5. The protein is N-(5'-phosphoribosyl)anthranilate isomerase of Rhizobium johnstonii (strain DSM 114642 / LMG 32736 / 3841) (Rhizobium leguminosarum bv. viciae).